The primary structure comprises 778 residues: Receptor like protein 28 (778 aa).

Residues 1–24 (MSGSHLRLRFLSLLLLCCVSSSTS) form the signal peptide. At 25-739 (SLFTFSYPVL…EEQEQVLNWK (715 aa)) the chain is on the extracellular side. 8 N-linked (GlcNAc...) asparagine glycosylation sites follow: Asn-60, Asn-72, Asn-93, Asn-106, Asn-111, Asn-147, Asn-170, and Asn-173. LRR repeat units follow at residues 99–123 (FHQL…EFGN), 125–147 (NKVE…SFSN), 148–171 (LSQL…VQNL), 172–195 (TNLS…LLMM), and 197–219 (FLSY…TSSK). One copy of the LRR 6; degenerate repeat lies at 220–240 (LEILYLGLKPFEGQILEPISK). 6 LRR repeats span residues 241 to 265 (LINL…LFSS), 266 to 291 (LKSL…LYIP), 293 to 313 (TLEK…ILKT), 314 to 338 (LQKL…LWRL), 340 to 363 (RLRS…VLVN), and 364 to 387 (SSME…PLSI). Residue Asn-253 is glycosylated (N-linked (GlcNAc...) asparagine). N-linked (GlcNAc...) asparagine glycans are attached at residues Asn-348 and Asn-363. The LRR 13; degenerate repeat unit spans residues 388–407 (KAFSAGYNNFSGEIPLSICN). Residues Asn-396, Asn-407, Asn-420, Asn-431, and Asn-476 are each glycosylated (N-linked (GlcNAc...) asparagine). LRR repeat units lie at residues 408-429 (RSSL…PQCL), 430-453 (SNLT…LCAG), 455-477 (SLQT…LLNC), 479-500 (SLEF…WLKA), 501-525 (LPNL…HQSP), 528-552 (FPEL…YFVN), 601-625 (LNSY…IGLL), 626-649 (KELI…LANA), 650-673 (TELE…LKTL), and 678-700 (YINV…SSFE). 2 N-linked (GlcNAc...) asparagine glycosylation sites follow: Asn-632 and Asn-648. The N-linked (GlcNAc...) asparagine glycan is linked to Asn-680. A helical membrane pass occupies residues 740 to 760 (AVATGYGTGLLLGLAIAQVIA). At 761–778 (SYKPDWLVKIIGLFRFCF) the chain is on the cytoplasmic side.

It belongs to the RLP family.

The protein resides in the cell membrane. In Arabidopsis thaliana (Mouse-ear cress), this protein is Receptor like protein 28.